Reading from the N-terminus, the 709-residue chain is Phosphoribosylformylglycinamidine synthase subunit PurL (709 aa).

The active site involves H36. 2 residues coordinate ATP: Y39 and K80. Residue E82 coordinates Mg(2+). Substrate is bound by residues 83-86 (SHNH) and R105. Catalysis depends on H84, which acts as the Proton acceptor. D106 provides a ligand contact to Mg(2+). A substrate-binding site is contributed by Q226. D252 is a binding site for Mg(2+). 294-296 (ETQ) lines the substrate pocket. ATP is bound by residues D470 and G507. S510 serves as a coordination point for substrate.

The protein belongs to the FGAMS family. Monomer. Part of the FGAM synthase complex composed of 1 PurL, 1 PurQ and 2 PurS subunits.

It localises to the cytoplasm. It catalyses the reaction N(2)-formyl-N(1)-(5-phospho-beta-D-ribosyl)glycinamide + L-glutamine + ATP + H2O = 2-formamido-N(1)-(5-O-phospho-beta-D-ribosyl)acetamidine + L-glutamate + ADP + phosphate + H(+). It participates in purine metabolism; IMP biosynthesis via de novo pathway; 5-amino-1-(5-phospho-D-ribosyl)imidazole from N(2)-formyl-N(1)-(5-phospho-D-ribosyl)glycinamide: step 1/2. In terms of biological role, part of the phosphoribosylformylglycinamidine synthase complex involved in the purines biosynthetic pathway. Catalyzes the ATP-dependent conversion of formylglycinamide ribonucleotide (FGAR) and glutamine to yield formylglycinamidine ribonucleotide (FGAM) and glutamate. The FGAM synthase complex is composed of three subunits. PurQ produces an ammonia molecule by converting glutamine to glutamate. PurL transfers the ammonia molecule to FGAR to form FGAM in an ATP-dependent manner. PurS interacts with PurQ and PurL and is thought to assist in the transfer of the ammonia molecule from PurQ to PurL. The protein is Phosphoribosylformylglycinamidine synthase subunit PurL of Saccharolobus solfataricus (strain ATCC 35092 / DSM 1617 / JCM 11322 / P2) (Sulfolobus solfataricus).